We begin with the raw amino-acid sequence, 194 residues long: UPF0301 protein BQ03640 (194 aa).

Belongs to the UPF0301 (AlgH) family.

The polypeptide is UPF0301 protein BQ03640 (Bartonella quintana (strain Toulouse) (Rochalimaea quintana)).